The primary structure comprises 269 residues: Glutamate racemase (269 aa).

Substrate contacts are provided by residues 7-8 (DS) and 39-40 (YG). Catalysis depends on Cys70, which acts as the Proton donor/acceptor. 71–72 (NT) is a substrate binding site. The Proton donor/acceptor role is filled by Cys194. A substrate-binding site is contributed by 195 to 196 (TH).

Belongs to the aspartate/glutamate racemases family.

It catalyses the reaction L-glutamate = D-glutamate. The protein operates within cell wall biogenesis; peptidoglycan biosynthesis. Provides the (R)-glutamate required for cell wall biosynthesis. The polypeptide is Glutamate racemase (Ruegeria sp. (strain TM1040) (Silicibacter sp.)).